Consider the following 601-residue polypeptide: Elongation factor 4 (601 aa).

Positions 5-187 (EHIRNFSIIA…AIVERLPAPE (183 aa)) constitute a tr-type G domain. GTP is bound by residues 17 to 22 (DHGKST) and 134 to 137 (NKID).

Belongs to the TRAFAC class translation factor GTPase superfamily. Classic translation factor GTPase family. LepA subfamily.

It is found in the cell inner membrane. It carries out the reaction GTP + H2O = GDP + phosphate + H(+). In terms of biological role, required for accurate and efficient protein synthesis under certain stress conditions. May act as a fidelity factor of the translation reaction, by catalyzing a one-codon backward translocation of tRNAs on improperly translocated ribosomes. Back-translocation proceeds from a post-translocation (POST) complex to a pre-translocation (PRE) complex, thus giving elongation factor G a second chance to translocate the tRNAs correctly. Binds to ribosomes in a GTP-dependent manner. This is Elongation factor 4 from Nitratidesulfovibrio vulgaris (strain ATCC 29579 / DSM 644 / CCUG 34227 / NCIMB 8303 / VKM B-1760 / Hildenborough) (Desulfovibrio vulgaris).